Here is a 129-residue protein sequence, read N- to C-terminus: MKNFHVVLEAAWLVRDVKTADDAIGVAISEAGKRLNPKLDFVEVDVGTTSCPLCGEPFSSVFIAANTALVGLIFEMKVFDAESAEHAERIAKSVIGKSLRDIPLTVVEVTEFERSTEKGEQQHKSKTEK.

The protein belongs to the UPF0212 family.

This chain is UPF0212 protein Mbar_A2902, found in Methanosarcina barkeri (strain Fusaro / DSM 804).